The following is a 1222-amino-acid chain: Serine/threonine-protein kinase WNK4 (1222 aa).

Residues 1-17 show a composition bias toward polar residues; sequence MLAPRNTETGVHMSQTE. Residues 1 to 163 are disordered; it reads MLAPRNTETG…KEDTETQAVA (163 aa). The residue at position 95 (serine 95) is a Phosphoserine. The span at 135-152 shows a compositional bias: basic and acidic residues; the sequence is EPPRVPDAAARERRREQE. Residues lysine 154 and lysine 172 each participate in a glycyl lysine isopeptide (Lys-Gly) (interchain with G-Cter in ubiquitin) cross-link. Positions 171–429 constitute a Protein kinase domain; that stretch reads LKFDIEIGRG…IQDLLTHAFF (259 aa). Serine 181 is a binding site for ATP. Residues lysine 183, lysine 223, and lysine 238 each participate in a glycyl lysine isopeptide (Lys-Gly) (interchain with G-Cter in ubiquitin) cross-link. ATP contacts are provided by residues 251–254 and lysine 301; that span reads TELM. Aspartate 318 serves as the catalytic Proton acceptor. Lysine 325 is covalently cross-linked (Glycyl lysine isopeptide (Lys-Gly) (interchain with G-Cter in ubiquitin)). 2 positions are modified to phosphoserine; by autocatalysis: serine 328 and serine 332. Glycyl lysine isopeptide (Lys-Gly) (interchain with G-Cter in ubiquitin) cross-links involve residues lysine 384, lysine 390, lysine 447, and lysine 451. The disordered stretch occupies residues 527–562; the sequence is LEVLPPDSGPPPATVSMTPGPPSAFPPEPEEPEADQ. Residues 533–553 show a composition bias toward pro residues; the sequence is DSGPPPATVSMTPGPPSAFPP. An interaction with KLHL3 region spans residues 554–564; the sequence is EPEEPEADQHQ. Serine 572 is modified (phosphoserine). Disordered stretches follow at residues 591-612, 626-679, 747-809, 836-873, and 927-1087; these read FLDASDPALQPPGGMPSSPAEP, RSGP…SVSD, DAGP…GTPF, QVSSNPCPQAPSSLLPSSSGASQVPFPSPSLPTSSPLP, and SPGL…QPSP. A compositionally biased stretch (low complexity) spans 627–638; that stretch reads SGPGSDFSPGDS. The segment covering 659–672 has biased composition (basic residues); sequence NPVKTLRRRPRSRL. Composition is skewed to low complexity over residues 792–809 and 845–873; these read FSTSPSSPGTPLSPGTPF and APSSLLPSSSGASQVPFPSPSLPTSSPLP. The span at 935-946 shows a compositional bias: pro residues; that stretch reads PPAPPGPLPSMP. Positions 953 to 963 are enriched in polar residues; that stretch reads DQESLSAQTAE. Residue lysine 990 forms a Glycyl lysine isopeptide (Lys-Gly) (interchain with G-Cter in ubiquitin) linkage. The RFXV motif motif lies at 996–999; the sequence is RFQV. Serine 1014 carries the phosphoserine modification. Over residues 1044–1056 the composition is skewed to basic and acidic residues; that stretch reads ETREALAESDRAA. A compositionally biased stretch (polar residues) spans 1076–1086; it reads GGSSPILSQPS. Residues lysine 1123, lysine 1136, and lysine 1137 each participate in a glycyl lysine isopeptide (Lys-Gly) (interchain with G-Cter in ubiquitin) cross-link. A disordered region spans residues 1169–1222; sequence SKGSFPTSRRNSLQRSDLPGPGIMRRNSLSGSSTGSQEQRASKGVTFAGDVGRM. 2 stretches are compositionally biased toward polar residues: residues 1172–1183 and 1195–1207; these read SFPTSRRNSLQR and NSLSGSSTGSQEQ. The residue at position 1196 (serine 1196) is a Phosphoserine.

It belongs to the protein kinase superfamily. Ser/Thr protein kinase family. WNK subfamily. Interacts with the C-terminal region of KCNJ1. Interacts with WNK1 and WNK3. Interacts with KLHL3. The cofactor is Mg(2+). Post-translationally, autophosphorylated at Ser-328 and Ser-332, promoting its activation. Phosphorylated by WNK1 and WNK3. Phosphorylated at Ser-572 in a MAP3K15/ASK3-dependent process in response to osmotic stress or hypotonic low-chloride stimulation. In terms of processing, ubiquitinated by the BCR(KLHL3) complex, leading to its degradation. Also ubiquitinated by the BCR(KLHL2) complex.

It is found in the cell junction. It localises to the tight junction. It carries out the reaction L-seryl-[protein] + ATP = O-phospho-L-seryl-[protein] + ADP + H(+). The catalysed reaction is L-threonyl-[protein] + ATP = O-phospho-L-threonyl-[protein] + ADP + H(+). Activation requires autophosphorylation of Ser-328 and Ser-332. Autophosphorylation and subsequent activation is inhibited by increases in intracellular ionic strength: Cl(-) potently inhibits WNK4 kinase activity via direct binding. Also inhibited by K(+) ions. Functionally, serine/threonine-protein kinase component of the WNK4-SPAK/OSR1 kinase cascade, which acts as a key regulator of ion transport in the distal nephron and blood pressure. The WNK4-SPAK/OSR1 kinase cascade is composed of WNK4, which mediates phosphorylation and activation of downstream kinases OXSR1/OSR1 and STK39/SPAK. Following activation, OXSR1/OSR1 and STK39/SPAK catalyze phosphorylation of ion cotransporters, such as SLC12A1/NKCC2, SLC12A2/NKCC1, SLC12A3/NCC, SLC12A5/KCC2 or SLC12A6/KCC3, regulating their activity. Acts as a molecular switch that regulates the balance between renal salt reabsorption and K(+) secretion by modulating the activities of renal transporters and channels, including the Na-Cl cotransporter SLC12A3/NCC and the K(+) channel, KCNJ1/ROMK. Regulates NaCl reabsorption in the distal nephron by activating the thiazide-sensitive Na-Cl cotransporter SLC12A3/NCC in distal convoluted tubule cells of kidney: activates SLC12A3/NCC in a OXSR1/OSR1- and STK39/SPAK-dependent process. Also acts as a scaffold protein independently of its protein kinase activity: negatively regulates cell membrane localization of various transporters and channels (CFTR, KCNJ1/ROMK, SLC4A4, SLC26A9 and TRPV4) by clathrin-dependent endocytosis. Also inhibits the activity of the epithelial Na(+) channel (ENaC) SCNN1A, SCNN1B, SCNN1D in a inase-independent mechanism. May also phosphorylate NEDD4L. This chain is Serine/threonine-protein kinase WNK4, found in Rattus norvegicus (Rat).